Consider the following 169-residue polypeptide: Peptide methionine sulfoxide reductase MsrA (169 aa).

Cys-10 is an active-site residue.

The protein belongs to the MsrA Met sulfoxide reductase family.

The enzyme catalyses L-methionyl-[protein] + [thioredoxin]-disulfide + H2O = L-methionyl-(S)-S-oxide-[protein] + [thioredoxin]-dithiol. It carries out the reaction [thioredoxin]-disulfide + L-methionine + H2O = L-methionine (S)-S-oxide + [thioredoxin]-dithiol. Functionally, has an important function as a repair enzyme for proteins that have been inactivated by oxidation. Catalyzes the reversible oxidation-reduction of methionine sulfoxide in proteins to methionine. This is Peptide methionine sulfoxide reductase MsrA from Streptococcus equi subsp. zooepidemicus (strain H70).